Reading from the N-terminus, the 236-residue chain is 2,3,4,5-tetrahydropyridine-2,6-dicarboxylate N-acetyltransferase (236 aa).

The protein belongs to the transferase hexapeptide repeat family. DapH subfamily.

It catalyses the reaction (S)-2,3,4,5-tetrahydrodipicolinate + acetyl-CoA + H2O = L-2-acetamido-6-oxoheptanedioate + CoA. It functions in the pathway amino-acid biosynthesis; L-lysine biosynthesis via DAP pathway; LL-2,6-diaminopimelate from (S)-tetrahydrodipicolinate (acetylase route): step 1/3. Its function is as follows. Catalyzes the transfer of an acetyl group from acetyl-CoA to tetrahydrodipicolinate. The sequence is that of 2,3,4,5-tetrahydropyridine-2,6-dicarboxylate N-acetyltransferase from Listeria innocua serovar 6a (strain ATCC BAA-680 / CLIP 11262).